Consider the following 78-residue polypeptide: DNA-directed RNA polymerase subunit Rpo5 (78 aa).

Belongs to the archaeal Rpo5/eukaryotic RPB5 RNA polymerase subunit family. Part of the RNA polymerase complex.

It localises to the cytoplasm. The catalysed reaction is RNA(n) + a ribonucleoside 5'-triphosphate = RNA(n+1) + diphosphate. Functionally, DNA-dependent RNA polymerase (RNAP) catalyzes the transcription of DNA into RNA using the four ribonucleoside triphosphates as substrates. The polypeptide is DNA-directed RNA polymerase subunit Rpo5 (Methanococcus vannielii (strain ATCC 35089 / DSM 1224 / JCM 13029 / OCM 148 / SB)).